Consider the following 1034-residue polypeptide: Sodium bicarbonate cotransporter 3 (1034 aa).

Disordered regions lie at residues 1-31 (MEAD…KTSS) and 53-99 (HVPF…SQRV). Residues 1-476 (MEADGAGEQM…DFKDALSLQC (476 aa)) lie on the Extracellular side of the membrane. A phosphoserine mark is found at S57, S60, S89, and S155. Basic residues predominate over residues 60-77 (SRRRHKHRGHKHHHRRRK). Residues 78-90 (DKDSDKEDGRESP) are compositionally biased toward basic and acidic residues. N176 carries N-linked (GlcNAc...) asparagine glycosylation. Phosphoserine occurs at positions 238, 250, 260, 263, 268, and 271. The segment covering 250-260 (SAPGNLDNSKS) has biased composition (polar residues). The tract at residues 250-276 (SAPGNLDNSKSGEMKGNGSGGSRENST) is disordered. N-linked (GlcNAc...) asparagine glycosylation occurs at N274. Phosphoserine occurs at positions 275 and 424. A helical transmembrane segment spans residues 477 to 497 (LASILFLYCACMSPVITFGGL). The Cytoplasmic segment spans residues 498–505 (LGEATEGR). A helical membrane pass occupies residues 506 to 526 (ISAIESLFGASLTGIAYSLFA). Residues 527–563 (GQPLTILGSTGPVLVFEKILFKFCRDYHLSYLSLRTS) are Extracellular-facing. The chain crosses the membrane as a helical span at residues 564-584 (IGLWTSFLCIVLVATDASSLV). At 585–593 (CYITRFTEE) the chain is on the cytoplasmic side. A helical transmembrane segment spans residues 594–614 (AFAALICIIFIYEALEKLFHL). Residues 615-685 (GEIYAFNMHN…MFVGSACGPH (71 aa)) lie on the Extracellular side of the membrane. C634 and C636 are oxidised to a cystine. N644, N654, and N664 each carry an N-linked (GlcNAc...) asparagine glycan. A disulfide bond links C670 and C682. A helical transmembrane segment spans residues 686-706 (GPYVPDVLFWCVVLFFTTFFL). Topologically, residues 707–729 (SSFLKQFKTKGYFPTKVRSTISD) are cytoplasmic. A helical transmembrane segment spans residues 730-750 (FAVFLTIVIMVAIDYLVGIPS). Over 751 to 776 (PKLHVPEKFEPTDPSRGWIISPLGDN) the chain is Extracellular. Residues 777–797 (PWWTLLIAAVPALLCTILIFM) traverse the membrane as a helical segment. The Cytoplasmic portion of the chain corresponds to 798-812 (DQQITAVIINRKEHK). Residues 813-833 (LKFIPMPVLYGVFLYMGVSSL) traverse the membrane as a helical segment. The tract at residues 815-915 (FIPMPVLYGV…MDLCFTKREL (101 aa)) is essential for cell membrane localization and transport activity. Over 834 to 876 (KGIQFFDRIKLFGMPAKHQPDLIYLRYVPLWKVHVFTVVQLTC) the chain is Extracellular. The helical transmembrane segment at 877–897 (LVLLWVIKASAAAVVFPMMVL) threads the bilayer. Residues 898–1034 (ALVFVRKLMD…KKYMDAETSL (137 aa)) are Cytoplasmic-facing. The CA2-binding stretch occupies residues 918 to 920 (LDD). The tract at residues 926 to 946 (KKKKEDDKKKKEKEEAERMLQ) is disordered. Position 951 is a phosphothreonine (T951). Phosphoserine is present on residues S960 and S1033. Positions 1031–1034 (ETSL) match the PDZ-binding motif.

This sequence belongs to the anion exchanger (TC 2.A.31) family. As to quaternary structure, forms a complex with ATP6V1B1 and NHERF1/EBP50. Interacts in a pH dependent-manner with CA2/carbonic anhydrase 2. Interacts with CFTR through NHERF1/EBP50. Interacts with USH1C. In terms of tissue distribution, expressed in the spiral ligament throughout the cochlea and in photoreceptors of the outer plexiform layer of the retina (at protein level).

The protein localises to the basolateral cell membrane. It localises to the apical cell membrane. The protein resides in the cell projection. It is found in the stereocilium. Its subcellular location is the cell membrane. It catalyses the reaction hydrogencarbonate(in) + Na(+)(in) = hydrogencarbonate(out) + Na(+)(out). Activity is inhibited by 4,4'-di-isothiocyanatostilbene-2,2'-disulfonic acid (DIDS - an inhibitor of several anion channels and transporters). Electroneutral sodium- and bicarbonate-dependent cotransporter with a Na(+):HCO3(-) 1:1 stoichiometry. Mediates the sodium-dependent bicarbonate transport important for pH recovery after acid load as well as for regulation of steady-state pH in the duodenum and vascular smooth muscle cells. Plays a key role in macrophage acidification, mediating bicarbonate import into the cytoplasm which is crucial for net acid extrusion and maintenance of cytoplasmic pH during phagocytosis. Provides cellular bicarbonate for de novo purine and pyrimidine synthesis and is a key mediator of de novo nucleotide synthesis downstream of mTORC1 signaling in proliferating cells. May be involved in maintaining locomotor activity, exploratory behavior, and hearing. The polypeptide is Sodium bicarbonate cotransporter 3 (Slc4a7) (Mus musculus (Mouse)).